Consider the following 358-residue polypeptide: uncharacterized protein (358 aa).

A disordered region spans residues 324-358; sequence DMEVEETPPTTNKDLPRGATQPKRNSIKRVSKLID. Residues 348-358 are compositionally biased toward basic residues; the sequence is NSIKRVSKLID.

This is an uncharacterized protein from Mycoplasma pneumoniae (strain ATCC 29342 / M129 / Subtype 1) (Mycoplasmoides pneumoniae).